The chain runs to 419 residues: Alpha-galactosidase A (419 aa).

An N-terminal signal peptide occupies residues Met1–Ala31. 2 cysteine pairs are disulfide-bonded: Cys52–Cys94 and Cys56–Cys63. Asn139 is a glycosylation site (N-linked (GlcNAc...) asparagine). Cys142 and Cys172 are joined by a disulfide. Asp170 (nucleophile) is an active-site residue. Tyr186 bears the Phosphotyrosine mark. A glycan (N-linked (GlcNAc...) asparagine) is linked at Asn192. Residues Cys202 and Cys223 are joined by a disulfide bond. Glu203–Tyr207 contributes to the substrate binding site. N-linked (GlcNAc...) asparagine glycosylation occurs at Asn215. Catalysis depends on Asp231, which acts as the Proton donor. An intrachain disulfide couples Cys378 to Cys382.

It belongs to the glycosyl hydrolase 27 family. In terms of assembly, homodimer.

The protein resides in the lysosome. It catalyses the reaction Hydrolysis of terminal, non-reducing alpha-D-galactose residues in alpha-D-galactosides, including galactose oligosaccharides, galactomannans and galactolipids.. The enzyme catalyses a globoside Gb3Cer (d18:1(4E)) + H2O = a beta-D-Gal-(1-&gt;4)-beta-D-Glc-(1&lt;-&gt;1)-Cer(d18:1(4E)) + D-galactose. It carries out the reaction a globoside Gb3Cer + H2O = a beta-D-galactosyl-(1-&gt;4)-beta-D-glucosyl-(1&lt;-&gt;1)-ceramide + D-galactose. Its activity is regulated as follows. Galactosylgalactosylglucosylceramidase activity is stimulated by saposin B and ammonium chloride. Its function is as follows. Catalyzes the hydrolysis of glycosphingolipids and participates in their degradation in the lysosome. In Mus musculus (Mouse), this protein is Alpha-galactosidase A.